Consider the following 466-residue polypeptide: 3-isopropylmalate dehydratase large subunit (466 aa).

The [4Fe-4S] cluster site is built by Cys345, Cys405, and Cys408.

Belongs to the aconitase/IPM isomerase family. LeuC type 1 subfamily. In terms of assembly, heterodimer of LeuC and LeuD. Requires [4Fe-4S] cluster as cofactor.

The enzyme catalyses (2R,3S)-3-isopropylmalate = (2S)-2-isopropylmalate. Its pathway is amino-acid biosynthesis; L-leucine biosynthesis; L-leucine from 3-methyl-2-oxobutanoate: step 2/4. Catalyzes the isomerization between 2-isopropylmalate and 3-isopropylmalate, via the formation of 2-isopropylmaleate. The chain is 3-isopropylmalate dehydratase large subunit from Microcystis aeruginosa (strain NIES-843 / IAM M-2473).